A 403-amino-acid polypeptide reads, in one-letter code: Keratin, type I cytoskeletal 19 (403 aa).

The segment at methionine 1–asparagine 82 is head. Position 7 is an omega-N-methylarginine (arginine 7). Serine 14 carries the phosphoserine modification. Arginine 24 carries the asymmetric dimethylarginine; alternate modification. Arginine 24 carries the post-translational modification Omega-N-methylarginine; alternate. Phosphoserine is present on serine 27. Arginine 32 carries the omega-N-methylarginine modification. Phosphoserine occurs at positions 35 and 40. Residues arginine 43 and arginine 51 each carry the omega-N-methylarginine modification. Phosphoserine is present on residues serine 57 and serine 67. Residues glutamate 83 to tryptophan 118 are coil 1A. Positions glutamate 83–tyrosine 394 constitute an IF rod domain. The linker 1 stretch occupies residues tyrosine 119–threonine 136. The coil 1B stretch occupies residues isoleucine 137–leucine 228. Residues arginine 229–isoleucine 251 form a linker 12 region. The necessary for interaction with PNN stretch occupies residues aspartate 247–histidine 393. The coil 2 stretch occupies residues leucine 252 to glutamine 390. A Phosphothreonine modification is found at threonine 326. The segment at glutamate 391–leucine 403 is rod-like helical tail. Tyrosine 394 is modified (phosphotyrosine). Serine 398 carries the post-translational modification Phosphoserine.

The protein belongs to the intermediate filament family. As to quaternary structure, heterotetramer of two type I and two type II keratins. Interacts with PNN. Interacts with the actin-binding domain of DMD. In terms of tissue distribution, expressed in brain, heart, skin and in costameres of myoplasm at the sarcolemmal membrane in skeletal and cardiac muscle fibers. Undifferentiated gonads and somatic cells of ovarian cords throughout the fetal ovary development.

In terms of biological role, involved in the organization of myofibers. Together with KRT8, helps to link the contractile apparatus to dystrophin at the costameres of striated muscle. The chain is Keratin, type I cytoskeletal 19 (Krt19) from Rattus norvegicus (Rat).